We begin with the raw amino-acid sequence, 208 residues long: Small ribosomal subunit protein uS4 (208 aa).

The S4 RNA-binding domain occupies 98-161 (QRLDNVVFRM…KSNPQVVRAL (64 aa)).

The protein belongs to the universal ribosomal protein uS4 family. As to quaternary structure, part of the 30S ribosomal subunit. Contacts protein S5. The interaction surface between S4 and S5 is involved in control of translational fidelity.

In terms of biological role, one of the primary rRNA binding proteins, it binds directly to 16S rRNA where it nucleates assembly of the body of the 30S subunit. With S5 and S12 plays an important role in translational accuracy. The protein is Small ribosomal subunit protein uS4 of Aliarcobacter butzleri (strain RM4018) (Arcobacter butzleri).